The sequence spans 288 residues: Mycothiol S-conjugate amidase (288 aa).

Zn(2+) is bound by residues H12, D15, and H142.

It belongs to the MshB deacetylase family. Mca subfamily. As to quaternary structure, monomer. Zn(2+) serves as cofactor.

It catalyses the reaction mycothiol S-conjugate + H2O = an N-acetyl-L-cysteine-S-conjugate + 1D-myo-inositol 2-amino-2-deoxy-alpha-D-glucopyranoside. With respect to regulation, partially inhibited by MSH when MSmB is used as substrate. Competitively inhibited by the GlcNAc-cyclohexyl derivative 5-(4-chlorophenyl)-N-((2R,3R,4R,5S,6R)-2-(cyclohexylthio)-tetrahydro-4,5-dihydroxy-6-(hydroxymethyl)-2H-pyran-3-yl)furan-2-carboxamide, which also inhibits MshB. A mycothiol (MSH, N-acetyl-cysteinyl-glucosaminyl-inositol) S-conjugate amidase, it recycles conjugated MSH to the N-acetyl cysteine conjugate and the MSH precursor. Involved in MSH-dependent detoxification of a number of alkylating agents and antibiotics. Activity is specific for the mycothiol moiety. Has a low but measurable deacetylation activity on GlcNAc-Ins (N-acetyl-glucosaminyl-inositol), and thus can also directly contribute to the production of MSH. This is Mycothiol S-conjugate amidase from Mycobacterium tuberculosis (strain ATCC 25618 / H37Rv).